A 306-amino-acid chain; its full sequence is Protein translocase subunit SecF (306 aa).

6 helical membrane passes run 17 to 37 (AFAV…TKGI), 134 to 154 (GLGM…RFQW), 158 to 178 (LGAI…LSFF), 185 to 205 (TVLA…IVIF), 232 to 254 (LLRT…FFGG), and 268 to 288 (VMAG…WLNL).

It belongs to the SecD/SecF family. SecF subfamily. As to quaternary structure, forms a complex with SecD. Part of the essential Sec protein translocation apparatus which comprises SecA, SecYEG and auxiliary proteins SecDF-YajC and YidC.

The protein resides in the cell inner membrane. Its function is as follows. Part of the Sec protein translocase complex. Interacts with the SecYEG preprotein conducting channel. SecDF uses the proton motive force (PMF) to complete protein translocation after the ATP-dependent function of SecA. The protein is Protein translocase subunit SecF of Pseudomonas aeruginosa (strain ATCC 15692 / DSM 22644 / CIP 104116 / JCM 14847 / LMG 12228 / 1C / PRS 101 / PAO1).